The following is a 421-amino-acid chain: MASSSVPPATVSAATTGPGPGFGFASKTKKKHFVQQEVKVFRAADPLVGVFLWGVAHSINELSQVPPPVMLLPDDFKASSKIKVNNHLFHRENLPSHFKFKEYCPQVFRNLRDRFGIDDQDYLVSLTRNPPSESEGSDGRFLICYDRTLVIKEVSSEDIADMHSNLSNYHQYIVKCHGNTLLPQFLGMYRVSVDNEDSYMLVMRNMFSHRLPVHRKYDLKGSLVSREASDKEKVKELPTLKGMDFLNKNQKVYIGEDEKKIFLEKLKRDVEFLVQLKIMDYSLLLGIHDIIRGSEPEEEGPVREDESEVDGDCSLTGPPALVGSYGTSPEGIGGYIHSHRPLGPGEFESFIDVHAIRSAEGAPQKEVYFMGLIDILTQYDAKKKAAHAAKTVKHGAGAEISTVHPEQYAKRFLDFITNIFA.

A2 carries the post-translational modification N-acetylalanine. A Phosphoserine modification is found at S26. Positions 43-420 constitute a PIPK domain; that stretch reads AADPLVGVFL…RFLDFITNIF (378 aa). Residues 69–75 form a required for interaction with PIP5K1A region; sequence VMLLPDD. Residue S349 is modified to Phosphoserine.

As to quaternary structure, interacts with PIP5K1A; the interaction inhibits PIP5K1A kinase activity. Phosphorylated, phosphorylation is induced by EGF.

Its subcellular location is the endoplasmic reticulum. It is found in the cytoplasm. It carries out the reaction a 1,2-diacyl-sn-glycero-3-phospho-(1D-myo-inositol-5-phosphate) + ATP = a 1,2-diacyl-sn-glycero-3-phospho-(1D-myo-inositol-4,5-bisphosphate) + ADP + H(+). The enzyme catalyses 1,2-dihexadecanoyl-sn-glycero-3-phospho-(1D-myo-inositol-5-phosphate) + ATP = 1,2-dihexadecanoyl-sn-glycero-3-phospho-(1D-myo-inositol-4,5-bisphosphate) + ADP + H(+). It catalyses the reaction 1,2-dihexadecanoyl-sn-glycero-3-phospho-(1D-myo-inositol-5-phosphate) + GTP = 1,2-dihexadecanoyl-sn-glycero-3-phospho-(1D-myo-inositol-4,5-bisphosphate) + GDP + H(+). In terms of biological role, phosphatidylinositol 5-phosphate 4-kinase with low enzymatic activity. May be a GTP sensor, has higher GTP-dependent kinase activity than ATP-dependent kinase activity. PIP4Ks negatively regulate insulin signaling through a catalytic-independent mechanism. They interact with PIP5Ks and suppress PIP5K-mediated PtdIns(4,5)P2 synthesis and insulin-dependent conversion to PtdIns(3,4,5)P3. This is Phosphatidylinositol 5-phosphate 4-kinase type-2 gamma (PIP4K2C) from Pongo abelii (Sumatran orangutan).